We begin with the raw amino-acid sequence, 620 residues long: Cell fusion protein cfr1 (620 aa).

Residues Leu-79–Met-169 form the Fibronectin type-III domain. Positions Leu-167–Ile-256 constitute a BRCT domain. Disordered regions lie at residues Gln-287 to Ala-566 and Lys-588 to Asp-620. Polar residues predominate over residues Ala-303–Asn-314. Residues Ser-315–Ala-330 show a composition bias toward low complexity. Positions Ser-352–Gln-375 are enriched in polar residues. Over residues Met-382–Asn-392 the composition is skewed to basic and acidic residues. The segment covering Leu-393–Glu-406 has biased composition (polar residues). Residues Asn-424–Thr-434 are compositionally biased toward low complexity. The span at Asn-445 to Val-468 shows a compositional bias: polar residues. Over residues Ala-472–Glu-484 the composition is skewed to acidic residues. A compositionally biased stretch (polar residues) spans Asn-506–Gly-515. Residues Thr-517–Pro-537 are compositionally biased toward basic and acidic residues.

Belongs to the CHS5 family.

It is found in the golgi apparatus. Its function is as follows. Required for cell fusion, independently of fus1. Appears to have a role in transporting proteins that are involved in mating. May act as a scaffold to retain cell fusion proteins in the cisternae of the Golgi. Degraded at the onset of mating and this leads to release of cell fusion proteins. The sequence is that of Cell fusion protein cfr1 (cfr1) from Schizosaccharomyces pombe (strain 972 / ATCC 24843) (Fission yeast).